Consider the following 318-residue polypeptide: Porphobilinogen deaminase (318 aa).

Position 241 is an S-(dipyrrolylmethanemethyl)cysteine (C241).

It belongs to the HMBS family. As to quaternary structure, monomer. Dipyrromethane is required as a cofactor.

It carries out the reaction 4 porphobilinogen + H2O = hydroxymethylbilane + 4 NH4(+). It participates in porphyrin-containing compound metabolism; protoporphyrin-IX biosynthesis; coproporphyrinogen-III from 5-aminolevulinate: step 2/4. In terms of biological role, tetrapolymerization of the monopyrrole PBG into the hydroxymethylbilane pre-uroporphyrinogen in several discrete steps. The chain is Porphobilinogen deaminase from Geotalea uraniireducens (strain Rf4) (Geobacter uraniireducens).